A 437-amino-acid chain; its full sequence is MDGLDNTTRLLAPSSLLPDNLTLSPNASSTSASTLSPLPVTSSPSPGLSLAPTPSIGFSPDLTPTPEPTSSSLAGGVAGQDSSTFPRPWIPHEPPFWDTPLNHGLNVFVGAALCITMLGLGCTVDVNHFGAHVRRPVGALLAALCQFGFLPLLAFLLALAFKLDEVAAVAVLLCGCCPGGNLSNLMSLLVDGDMNLSIIMTISSTLLALVLMPLCLWIYSRAWINTPLVQLLPLGAVTLTLCSTLIPIGLGVFIRYKYNRVADYIVKVSLCSLLVTLVVLFIMTGTMLGPELLASIPAAVYVVAIFMPLAGYASGYGLATLFHLPPNCKRTVCLETGSQNVQLCTAILKLAFPPRFIGSMYMFPLLYALFQSAEAGVFVLIYKMYGSEILHKREALDEDDDTDISYKKLKEEELADTSYGTVGTDDLVLMETTQTSL.

Over 1 to 103 the chain is Extracellular; sequence MDGLDNTTRL…PPFWDTPLNH (103 aa). N-linked (GlcNAc...) asparagine glycans are attached at residues Asn6, Asn20, and Asn26. Residues 16–84 are disordered; sequence LLPDNLTLSP…GGVAGQDSST (69 aa). Over residues 21–50 the composition is skewed to low complexity; that stretch reads LTLSPNASSTSASTLSPLPVTSSPSPGLSL. Residues 104–124 form a helical membrane-spanning segment; that stretch reads GLNVFVGAALCITMLGLGCTV. At 125–140 the chain is on the cytoplasmic side; the sequence is DVNHFGAHVRRPVGAL. The helical transmembrane segment at 141–161 threads the bilayer; sequence LAALCQFGFLPLLAFLLALAF. The Extracellular portion of the chain corresponds to 162-197; sequence KLDEVAAVAVLLCGCCPGGNLSNLMSLLVDGDMNLS. N-linked (GlcNAc...) asparagine glycans are attached at residues Asn181 and Asn195. The chain crosses the membrane as a helical span at residues 198–218; that stretch reads IIMTISSTLLALVLMPLCLWI. Over 219 to 233 the chain is Cytoplasmic; the sequence is YSRAWINTPLVQLLP. The helical transmembrane segment at 234 to 254 threads the bilayer; the sequence is LGAVTLTLCSTLIPIGLGVFI. The Extracellular portion of the chain corresponds to 255–267; it reads RYKYNRVADYIVK. The helical transmembrane segment at 268–288 threads the bilayer; sequence VSLCSLLVTLVVLFIMTGTML. Over 289-291 the chain is Cytoplasmic; the sequence is GPE. The helical transmembrane segment at 292–312 threads the bilayer; sequence LLASIPAAVYVVAIFMPLAGY. At 313–360 the chain is on the extracellular side; it reads ASGYGLATLFHLPPNCKRTVCLETGSQNVQLCTAILKLAFPPRFIGSM. Residues 361 to 381 form a helical membrane-spanning segment; sequence YMFPLLYALFQSAEAGVFVLI. The Cytoplasmic segment spans residues 382–437; that stretch reads YKMYGSEILHKREALDEDDDTDISYKKLKEEELADTSYGTVGTDDLVLMETTQTSL.

Belongs to the bile acid:sodium symporter (BASS) (TC 2.A.28) family. Post-translationally, activated following N-terminal proteolytic cleavage by thrombin and/or proteases. In terms of tissue distribution, mainly expressed in the central nervous system cholinergic neurons. Expressed (at protein level) in motor regions of the spinal cord and rhombencephalon, in mesopontine cholinergic neurons, the medial habenula, cholinergic areas of the forebrain, and the gut myenteric plexus.

It localises to the cell membrane. In terms of biological role, transporter for bile acids. The chain is Sodium/bile acid cotransporter 4 (Slc10a4) from Rattus norvegicus (Rat).